Consider the following 663-residue polypeptide: MRGCLQSVRLLTTALGQSPRRPLPFAFRLPPNASRLFSTCASRAAATAKKPPSELEERILAIPIERYRNFCIVAHVDHGKSTLSDRLLELTGTIEPGSNKQVLDKLDVERERGITVKAQTCTMLYNHKGDDYLLHLVDTPGHVDFRAEVSRSYASCGGALLLVDASQGVQAQTVANFYLAFAQGLELVPVINKVDLPSADPKRALEQMETTFELDTDKAVLVSAKTGLNVQQLLPTIVEQIPAPIGDHTKPLRVLLVDSWYDTYKGVILLIRVFDGSVKAGDQLVSFATQKKYIVGEVGIMYPNQTAQSVLRAGQVGYVYFNPGMKKSQEAKIGDTLTKVGSEKLVKPLPGFEEPKAMVFVAAYPVHADDFPHLEDSINQLLLNDRSITVKKESSEALGAGFRLGFLGTLHCSVFQDRLQQEHGANIIITPPSVPCKVLWNSGEETVITSPVDFPDGDSNRMKVKEFQEPYVLTTLTFPHEYLGKVIELCEGNRGEQVSLEFFTASQVILKYQLPLAQLVDDFFGKLKGLTKGYASLDYEESGWRKSNVVKLKLLVNKMPVDAVSRVVHISQVPRLGKQWVTKFKEHVDRQMFEIVIQAAIGNKIVARETIKPYRKDVLAKLHASDVTRRKKLLERQKEGRKKLQAVGNVVIEHKAFQAFLSK.

The N-terminal 37 residues, 1 to 37, are a transit peptide targeting the mitochondrion; sequence MRGCLQSVRLLTTALGQSPRRPLPFAFRLPPNASRLF. The tr-type G domain occupies 65–245; sequence ERYRNFCIVA…TIVEQIPAPI (181 aa). Residues 74 to 81, 138 to 142, and 192 to 195 each bind GTP; these read AHVDHGKS, DTPGH, and NKVD.

The protein belongs to the TRAFAC class translation factor GTPase superfamily. Classic translation factor GTPase family. LepA subfamily.

Its subcellular location is the mitochondrion inner membrane. It carries out the reaction GTP + H2O = GDP + phosphate + H(+). In terms of biological role, promotes mitochondrial protein synthesis. May act as a fidelity factor of the translation reaction, by catalyzing a one-codon backward translocation of tRNAs on improperly translocated ribosomes. Binds to mitochondrial ribosomes in a GTP-dependent manner. This is Translation factor GUF1, mitochondrial from Uncinocarpus reesii (strain UAMH 1704).